The following is a 213-amino-acid chain: MVLRYSYVFKQPVNYSNIELNEIKNIKDEKVRQNSIFISYLNGLYNSLNVLEMVSISGSLPSKLIQSIFKIILSNYDYNAIGKHFKTESILIGESLFKWPSPRIQQFDQFFFQDYLYSSPENYKGSLVGVNEYSMVWTLGIILYQCLTGELPFPTYPKIVNFITSSSQNVEIPPQFYKPENSLLIQLITCCLFKNPAQRISWNEIVNHSFFKN.

In terms of domain architecture, Protein kinase spans M1–F211.

It belongs to the protein kinase superfamily. Ser/Thr protein kinase family.

The protein is Probable inactive serine/threonine-protein kinase DDB_G0280559 of Dictyostelium discoideum (Social amoeba).